The following is a 342-amino-acid chain: Cell division protein ZipA (342 aa).

Over 1–6 the chain is Periplasmic; sequence MEDLQL. The chain crosses the membrane as a helical span at residues 7–27; sequence VLFILGAIAIVAVLVHGFWSI. Residues 28–342 lie on the Cytoplasmic side of the membrane; the sequence is RRQQPKSLKD…DYLHRIRANA (315 aa). The tract at residues 33–57 is disordered; it reads KSLKDSPMGNFYKQQADKESPPKRV. Basic and acidic residues predominate over residues 47–57; that stretch reads QADKESPPKRV.

The protein belongs to the ZipA family. In terms of assembly, interacts with FtsZ via their C-terminal domains.

It localises to the cell inner membrane. In terms of biological role, essential cell division protein that stabilizes the FtsZ protofilaments by cross-linking them and that serves as a cytoplasmic membrane anchor for the Z ring. Also required for the recruitment to the septal ring of downstream cell division proteins. This Shewanella sp. (strain W3-18-1) protein is Cell division protein ZipA.